Reading from the N-terminus, the 320-residue chain is Pyrroline-5-carboxylate reductase 1, mitochondrial (320 aa).

Serine 2 carries the post-translational modification N-acetylserine. NADP(+)-binding positions include 6–11 (IGAGQL) and serine 34. NADPH-binding residues include alanine 8, glutamine 10, leucine 11, serine 34, aspartate 36, asparagine 56, valine 70, lysine 71, and alanine 97. NADP(+)-binding positions include asparagine 56, 69 to 72 (AVKP), and 95 to 97 (CAA). Residue glutamate 164 coordinates L-proline. Asparagine 230 is a binding site for NADPH. L-proline is bound by residues alanine 237 and threonine 238. Serine 278 is modified (phosphoserine). The segment at 292 to 320 (LDSPPGTSLAPSGHSKLLPRSMAPAGKQD) is disordered.

This sequence belongs to the pyrroline-5-carboxylate reductase family. Homodecamer; composed of 5 homodimers. Interacts with LTO1.

It localises to the mitochondrion. The catalysed reaction is L-proline + NADP(+) = (S)-1-pyrroline-5-carboxylate + NADPH + 2 H(+). The enzyme catalyses L-proline + NAD(+) = (S)-1-pyrroline-5-carboxylate + NADH + 2 H(+). The protein operates within amino-acid biosynthesis; L-proline biosynthesis; L-proline from L-glutamate 5-semialdehyde: step 1/1. Its function is as follows. Oxidoreductase that catalyzes the last step in proline biosynthesis, which corresponds to the reduction of pyrroline-5-carboxylate to L-proline using NAD(P)H. At physiologic concentrations, has higher specific activity in the presence of NADH. Involved in the cellular response to oxidative stress. The polypeptide is Pyrroline-5-carboxylate reductase 1, mitochondrial (PYCR1) (Bos taurus (Bovine)).